We begin with the raw amino-acid sequence, 279 residues long: Release factor glutamine methyltransferase (279 aa).

S-adenosyl-L-methionine-binding positions include 118–122 (GTGSG), aspartate 141, and asparagine 182. Substrate is bound at residue 182-185 (NPPY).

The protein belongs to the protein N5-glutamine methyltransferase family. PrmC subfamily.

It catalyses the reaction L-glutaminyl-[peptide chain release factor] + S-adenosyl-L-methionine = N(5)-methyl-L-glutaminyl-[peptide chain release factor] + S-adenosyl-L-homocysteine + H(+). Functionally, methylates the class 1 translation termination release factors RF1/PrfA and RF2/PrfB on the glutamine residue of the universally conserved GGQ motif. In Streptococcus pneumoniae (strain ATCC BAA-255 / R6), this protein is Release factor glutamine methyltransferase.